The following is a 260-amino-acid chain: Tetraspanin-14 (260 aa).

The Cytoplasmic segment spans residues 1 to 10; that stretch reads MKSQSHKPWN. The helical transmembrane segment at 11-31 threads the bilayer; the sequence is LVAGIFFPIITFFLSAPLVGH. Residues 32 to 54 lie on the Extracellular side of the membrane; that stretch reads ALYLFCMRNDHVYYRDFQSTLPR. A helical transmembrane segment spans residues 55 to 75; the sequence is VQTLVSVSLLALFLLSNIGMF. Topologically, residues 76 to 80 are cytoplasmic; that stretch reads LRPRR. Residues 81–101 traverse the membrane as a helical segment; it reads LSYFLVIVFFIGFAYSGVYKM. Residues 102-260 lie on the Extracellular side of the membrane; that stretch reads ESRRFSPTPM…FLSSLTSLFR (159 aa). Residue Asn182 is glycosylated (N-linked (GlcNAc...) asparagine).

The protein belongs to the tetraspanin (TM4SF) family.

The protein localises to the membrane. Its function is as follows. May be involved in the regulation of cell differentiation. The sequence is that of Tetraspanin-14 (TET14) from Arabidopsis thaliana (Mouse-ear cress).